The chain runs to 168 residues: MSEENTTNNEAAAAEGKAPAGFGIKRVFTKDLSFEVPAGLGAFSLQGQPNVGQDLNTQINRVDDTHYEVVLKVTVTVKMGEDKVAFLAEVHQAGIFQVVGIEGPQLQQVLSTACPQILFPYVRETIDSLAVRGGFAPVLLPQINFDALFVQAVAQAKAQADSQAEADA.

The protein belongs to the SecB family. In terms of assembly, homotetramer, a dimer of dimers. One homotetramer interacts with 1 SecA dimer.

It localises to the cytoplasm. One of the proteins required for the normal export of preproteins out of the cell cytoplasm. It is a molecular chaperone that binds to a subset of precursor proteins, maintaining them in a translocation-competent state. It also specifically binds to its receptor SecA. The polypeptide is Protein-export protein SecB (Saccharophagus degradans (strain 2-40 / ATCC 43961 / DSM 17024)).